The following is a 351-amino-acid chain: Pentatricopeptide repeat-containing protein At3g56030, mitochondrial (351 aa).

Residues 1 to 41 (MFRLKPLISVDLNQTMSLLRRFVKEANNSRFLLQSISGRSF) constitute a mitochondrion transit peptide. PPR repeat units follow at residues 124 to 158 (RKHS…EFGL), 159 to 193 (STCV…AIPV), 194 to 224 (DVTS…MEEE), and 232 to 266 (DTRT…GLSV).

Belongs to the PPR family. P subfamily.

It localises to the mitochondrion. The sequence is that of Pentatricopeptide repeat-containing protein At3g56030, mitochondrial from Arabidopsis thaliana (Mouse-ear cress).